Consider the following 392-residue polypeptide: Lysine acetyltransferase (392 aa).

The enzyme catalyses L-lysine + acetyl-CoA = N(6)-acetyl-L-lysine + CoA + H(+). Its pathway is amino-acid degradation; L-lysine degradation via acetylation pathway; glutarate from L-lysine: step 1/6. Its activity is regulated as follows. Activity is inhibited by 5-aminovalerate. Functionally, lysine N-6-acetyl transferase (LAT) that catalyzes the first step of the lysine degradation pathway. The chain is Lysine acetyltransferase from Yarrowia lipolytica (strain CLIB 122 / E 150) (Yeast).